A 427-amino-acid chain; its full sequence is Histidinol dehydrogenase (427 aa).

NAD(+) contacts are provided by tyrosine 123, glutamine 185, and asparagine 208. Positions 231, 253, and 256 each coordinate substrate. The Zn(2+) site is built by glutamine 253 and histidine 256. Active-site proton acceptor residues include glutamate 321 and histidine 322. Substrate contacts are provided by histidine 322, aspartate 355, glutamate 409, and histidine 414. Aspartate 355 contributes to the Zn(2+) binding site. Histidine 414 lines the Zn(2+) pocket.

Belongs to the histidinol dehydrogenase family. It depends on Zn(2+) as a cofactor.

The catalysed reaction is L-histidinol + 2 NAD(+) + H2O = L-histidine + 2 NADH + 3 H(+). It functions in the pathway amino-acid biosynthesis; L-histidine biosynthesis; L-histidine from 5-phospho-alpha-D-ribose 1-diphosphate: step 9/9. Its function is as follows. Catalyzes the sequential NAD-dependent oxidations of L-histidinol to L-histidinaldehyde and then to L-histidine. This Oceanobacillus iheyensis (strain DSM 14371 / CIP 107618 / JCM 11309 / KCTC 3954 / HTE831) protein is Histidinol dehydrogenase.